Reading from the N-terminus, the 92-residue chain is Endoribonuclease VapD homolog (92 aa).

The protein belongs to the VapD ribonuclease family. In terms of assembly, homodimer.

Functionally, cleaves ssRNA, mostly between U:A. This Neisseria gonorrhoeae protein is Endoribonuclease VapD homolog.